The following is a 143-amino-acid chain: Transcriptional regulator SlyA (143 aa).

The HTH marR-type domain occupies 2–135; the sequence is ESTLGSDLAR…LSGLIDKLEK (134 aa). A DNA-binding region (H-T-H motif) is located at residues 49 to 72; the sequence is QIQLAKAIGIEQPSLVRTLDQLEE.

Belongs to the SlyA family. As to quaternary structure, homodimer.

In terms of biological role, transcription regulator that can specifically activate or repress expression of target genes. The sequence is that of Transcriptional regulator SlyA from Yersinia pestis bv. Antiqua (strain Antiqua).